Consider the following 353-residue polypeptide: Transcription factor MafA (353 aa).

The residue at position 14 (serine 14) is a Phosphoserine. Lysine 32 is covalently cross-linked (Glycyl lysine isopeptide (Lys-Gly) (interchain with G-Cter in SUMO2)). 2 disordered regions span residues 40–108 (RFCH…GGTS) and 177–219 (ADDM…GAGH). Over residues 46 to 73 (PPGSLSSTPLSTPCSSVPSSPSFCAPSP) the composition is skewed to low complexity. Serine 49 carries the post-translational modification Phosphoserine. Residues threonine 53 and threonine 57 each carry the phosphothreonine modification. Residues serine 61 and serine 65 each carry the phosphoserine modification. The segment covering 74-93 (GTGGGGGAGGGGGSSQAGGA) has biased composition (gly residues). Basic residues predominate over residues 183–210 (GHHHGAHHAAHHHHAAHHHHHHHHHHGG). Residues 254 to 279 (RLKQKRRTLKNRGYAQSCRFKRVQQR) are basic motif. The bZIP domain occupies 254-317 (RLKQKRRTLK…DLYKEKYEKL (64 aa)). The tract at residues 282 to 303 (LESEKCQLQSQVEQLKLEVGRL) is leucine-zipper. The interval 315-353 (EKLAGRGGPGSAGGAGFPREPSPPQAGPGGAKGTADFFL) is disordered. Residues 319 to 330 (GRGGPGSAGGAG) are compositionally biased toward gly residues.

Belongs to the bZIP family. Maf subfamily. In terms of assembly, forms homodimers or heterodimers. Monomers and dimers are able to bind DNA, but the off-rate is faster for monomers. Interacts with NEUROD1 and PDX1. May interact with MAFB, FOS, JUN and PCAF. Ubiquitinated, leading to its degradation by the proteasome. Post-translationally, phosphorylated at tyrosines. In terms of tissue distribution, expressed in the islets of Langerhans (at protein level).

It is found in the nucleus. Transcription factor that activates insulin gene expression. Acts synergistically with NEUROD1/BETA2 and PDX1. Binds the insulin enhancer C1/RIPE3b element. Binds to consensus TRE-type MARE 5'-TGCTGACTCAGCA-3' DNA sequence. In Homo sapiens (Human), this protein is Transcription factor MafA (MAFA).